Here is an 867-residue protein sequence, read N- to C-terminus: Zinc finger protein zfp-1 (867 aa).

A PHD-type 1 zinc finger spans residues 5 to 57 (VGGCCVCADENGWTDNPLIYCDGENCEVAVHQGCYGIQEVPEGEWFCAKCTKA). Residues 69–102 (TFCCQLCPFDYGALKKTDRNGWAHVICALYIPEV) form a C2HC pre-PHD-type 2 zinc finger. Residues 69-186 (TFCCQLCPFD…KYCGYCENHL (118 aa)) are extended PHD2 domain (ePHD2). Residues 125–186 (KLCYICNEER…KYCGYCENHL (62 aa)) form a PHD-type 2 zinc finger. 4 disordered regions span residues 267 to 311 (GSTV…SLSS), 440 to 477 (KNDM…GKSP), 503 to 586 (ADRT…QSNR), and 753 to 773 (SSGA…STAG). Positions 285-311 (PLTTSSRSSVAQDPSPPLTINKNSLSS) are enriched in polar residues. Residues 503–512 (ADRTAAERRA) show a composition bias toward basic and acidic residues. Positions 516 to 527 (QSQPSTSTNGGP) are enriched in polar residues. Residues 538–550 (HTNSTNSTNHQNN) show a composition bias toward low complexity. The span at 551–573 (GLTQNAPASTSMQAGTSSNDGVI) shows a compositional bias: polar residues. Over residues 574–585 (SQNGTSSTSQSN) the composition is skewed to low complexity. The span at 758–771 (VNSNIQNHRATPST) shows a compositional bias: polar residues.

In terms of assembly, multimer; in vitro. Interacts (via C-terminus) with dot-1.1 to form a heterodimer known as the zfp-1-dot-1.1 complex or DotCom complex. As to expression, isoform a: Expressed at high levels in maturing oocytes, but at low levels in the rest of the germ line (at protein level). Isoform a: Not expressed in the pharynx, germ line and tail. Isoform c: Not expressed in the germ line (at protein level). Isoform c: Uniformly expressed.

It localises to the nucleus. It is found in the chromosome. Its function is as follows. Recruits the histone methyltransferase dot-1.1 to chromatin to methylate 'Lys-79' of histone H3 and activate transcription. Recognizes and binds histone H3 methylated at 'Lys-4' (H3K4me) at the promoters of target genes. During stress, the zfp-1-dot-1.1 complex also plays a role in the deubiquitination of histone H2B sites, which negatively modulates the RNA polymerase II-induced transcription of highly expressed genes. In response to stress, binds to the pdk-1 promoter to negatively regulate pdk-1 expression, which negatively modulates daf-16/FOXO-mediated gene expression. Thus, most likely via this mechanism, in response to stress, it confers a protective role against neuronal necrosis. Plays a role in Insulin/IGF-1-like signaling (IIS)- and diet restriction-mediated lifespan extension by controlling daf-16/FOXO and pha-4/FOXA recruitment to target promoters. May negatively regulate the expression of genes required for vulval development. May play a role in axon guidance in D-type motor neurons. May suppress sensitivity to RNAi. Functionally, required for migration of HSN motor neurons during embryogenesis. The sequence is that of Zinc finger protein zfp-1 from Caenorhabditis elegans.